The following is a 967-amino-acid chain: MKKKLKSVLIWFLIFTFNLSLGSFREVFADNNDAVLATAITLSKNEDKLLVNQTDTLTAVVTPDNASNKGVTWSSSDTNTAAVDQNGKITALKVGTVTITAATQDGSNLSSSCTVSITRLANSIVLNKMVDKLPVGQTDLLTALVRPLDSAVKDVTWTTSDPSVVSVDDKGNIKALKLGMAVVTAAVNDGRNLHASCNVYVTNLLSKRKKADLVVTLDNSMNIDKTTFKDKLNKYIESKLKGSNIDYTIQSIQGYKSKKVLIIQDQPAWESGTKVYDDIKQEGYTSDVITANQISSTELTQYSHIYIPSDQAQSFYDELNQNYSKLEAWTKGGGILIFNAADEGHHSGQWQGSFLGLTHTPSDFQPTITIVKQDPILTANLKTTITGNYAAHSQFTSYPSNSIIFAVGNKNLPTILEYRYGDGLVFAQTTTAEFYATNSGDLSPYLDNEIKYTIQKTLGRSFSDILKKPTWRENSEKFVINLGDTLANDVKENSMAQTLAELESNKAYVTLIGNNNNKDTLNSFINKNDGRGMFIDNSDLDGALSKAGDYIMTVLNKEEQNSNMFLTDDYINYNESSSEDVSWSYTQDCKHLNYDNDFVNCSKTGDIALDNDLGISDFANGQWVNNEINEFKKPGKYTIAYKFKDNAIVNETVNVNRKPTPIFTAYTAQDAVSGKYDVVIKDEDKSYDIDHENSDGDRKGIVNSKFQWKEVTQGVNDTWHDGKLPSGQDSNKDFIVKLEVQDLEGQWSNPLVKYITTRNSNVAPHAQFTESAEEMPVDQLNNDASVGMDAIFTDESYDANGDSIREHWIVTDNNGNTIYDSTSMPKASVFVGKPLGTYNVTLTCDDGPTPKVGAMLTSDSYTLQLKLVPINHKPVAKFEVDNTSKVPADIKITEDSTDPDGDKITEKDWTVTDDKGKVVLQTENKLPDLSNLNGSYTITLKVKDSPVGLPELWSDPLSKTIIVEGAK.

The signal sequence occupies residues 1–29 (MKKKLKSVLIWFLIFTFNLSLGSFREVFA). BIG2 domains are found at residues 38-107 (TAIT…QDGS) and 133-190 (LPVG…VNDG).

This is an uncharacterized protein from Clostridium acetobutylicum (strain ATCC 824 / DSM 792 / JCM 1419 / IAM 19013 / LMG 5710 / NBRC 13948 / NRRL B-527 / VKM B-1787 / 2291 / W).